A 230-amino-acid chain; its full sequence is Large ribosomal subunit protein uL1 (230 aa).

Belongs to the universal ribosomal protein uL1 family. As to quaternary structure, part of the 50S ribosomal subunit.

Its function is as follows. Binds directly to 23S rRNA. The L1 stalk is quite mobile in the ribosome, and is involved in E site tRNA release. In terms of biological role, protein L1 is also a translational repressor protein, it controls the translation of the L11 operon by binding to its mRNA. This Lactobacillus gasseri (strain ATCC 33323 / DSM 20243 / BCRC 14619 / CIP 102991 / JCM 1131 / KCTC 3163 / NCIMB 11718 / NCTC 13722 / AM63) protein is Large ribosomal subunit protein uL1.